Reading from the N-terminus, the 135-residue chain is Small ribosomal subunit protein eS24A (135 aa).

S2 is subject to N-acetylserine. S14 is modified (phosphoserine). Residue K21 forms a Glycyl lysine isopeptide (Lys-Gly) (interchain with G-Cter in ubiquitin) linkage. S56 is subject to Phosphoserine. Residues 102–135 are disordered; sequence KASRQQRKQKKNRDKKIFGTGKRLAKKVARRNAD. Composition is skewed to basic residues over residues 105 to 115 and 124 to 135; these read RQQRKQKKNRD and RLAKKVARRNAD.

It belongs to the eukaryotic ribosomal protein eS24 family. As to quaternary structure, component of the small ribosomal subunit (SSU). Mature yeast ribosomes consist of a small (40S) and a large (60S) subunit. The 40S small subunit contains 1 molecule of ribosomal RNA (18S rRNA) and 33 different proteins (encoded by 57 genes). The large 60S subunit contains 3 rRNA molecules (25S, 5.8S and 5S rRNA) and 46 different proteins (encoded by 81 genes). In terms of processing, N-terminally acetylated by acetyltransferase NatA. Also partially acetylated by NatC.

The protein localises to the cytoplasm. In terms of biological role, component of the ribosome, a large ribonucleoprotein complex responsible for the synthesis of proteins in the cell. The small ribosomal subunit (SSU) binds messenger RNAs (mRNAs) and translates the encoded message by selecting cognate aminoacyl-transfer RNA (tRNA) molecules. The large subunit (LSU) contains the ribosomal catalytic site termed the peptidyl transferase center (PTC), which catalyzes the formation of peptide bonds, thereby polymerizing the amino acids delivered by tRNAs into a polypeptide chain. The nascent polypeptides leave the ribosome through a tunnel in the LSU and interact with protein factors that function in enzymatic processing, targeting, and the membrane insertion of nascent chains at the exit of the ribosomal tunnel. This is Small ribosomal subunit protein eS24A from Saccharomyces cerevisiae (strain ATCC 204508 / S288c) (Baker's yeast).